Consider the following 141-residue polypeptide: Large ribosomal subunit protein uL11 (141 aa).

It belongs to the universal ribosomal protein uL11 family. Part of the ribosomal stalk of the 50S ribosomal subunit. Interacts with L10 and the large rRNA to form the base of the stalk. L10 forms an elongated spine to which L12 dimers bind in a sequential fashion forming a multimeric L10(L12)X complex. One or more lysine residues are methylated.

Functionally, forms part of the ribosomal stalk which helps the ribosome interact with GTP-bound translation factors. In Ruminiclostridium cellulolyticum (strain ATCC 35319 / DSM 5812 / JCM 6584 / H10) (Clostridium cellulolyticum), this protein is Large ribosomal subunit protein uL11.